The following is a 504-amino-acid chain: Beta-glucosidase 24 (504 aa).

Residues 1–18 (MELLWLLLLLLMASSTSS) form the signal peptide. Gln47 is a binding site for a beta-D-glucoside. Asn75 is a glycosylation site (N-linked (GlcNAc...) asparagine). A beta-D-glucoside is bound by residues His151 and 196–197 (NE). Residue Glu197 is the Proton donor of the active site. A disulfide bridge links Cys216 with Cys224. N-linked (GlcNAc...) asparagine glycosylation occurs at Asn329. Tyr340 is a binding site for a beta-D-glucoside. Asn371 carries N-linked (GlcNAc...) asparagine glycosylation. An a beta-D-glucoside-binding site is contributed by Glu411. Glu411 serves as the catalytic Nucleophile. Asn421 carries an N-linked (GlcNAc...) asparagine glycan. A beta-D-glucoside-binding positions include Trp460, 467–468 (EW), and Phe476.

It belongs to the glycosyl hydrolase 1 family.

The enzyme catalyses Hydrolysis of terminal, non-reducing beta-D-glucosyl residues with release of beta-D-glucose.. The protein is Beta-glucosidase 24 (BGLU24) of Oryza sativa subsp. japonica (Rice).